We begin with the raw amino-acid sequence, 246 residues long: tRNA (guanine-N(7)-)-methyltransferase (246 aa).

Residues Glu77, Glu102, Asp129, and Asp152 each contribute to the S-adenosyl-L-methionine site. The active site involves Asp152. Residues Lys156, Asp188, and 225–228 contribute to the substrate site; that span reads TKFE.

The protein belongs to the class I-like SAM-binding methyltransferase superfamily. TrmB family.

The enzyme catalyses guanosine(46) in tRNA + S-adenosyl-L-methionine = N(7)-methylguanosine(46) in tRNA + S-adenosyl-L-homocysteine. The protein operates within tRNA modification; N(7)-methylguanine-tRNA biosynthesis. Functionally, catalyzes the formation of N(7)-methylguanine at position 46 (m7G46) in tRNA. In Haemophilus influenzae (strain PittEE), this protein is tRNA (guanine-N(7)-)-methyltransferase.